The chain runs to 174 residues: Cytochrome c-type biogenesis protein CcmE (174 aa).

Residues 1-8 lie on the Cytoplasmic side of the membrane; it reads MNPRRKSR. A helical; Signal-anchor for type II membrane protein membrane pass occupies residues 9–29; sequence LSVVLFILLGISVASALVLYA. Over 30-174 the chain is Periplasmic; the sequence is LRQNIDLFYT…QEKQFKEGNQ (145 aa). His-131 and Tyr-135 together coordinate heme. The disordered stretch occupies residues 149–174; that stretch reads KPMGISDLKNESDRDRQEKQFKEGNQ. Over residues 156–174 the composition is skewed to basic and acidic residues; that stretch reads LKNESDRDRQEKQFKEGNQ.

Belongs to the CcmE/CycJ family.

It localises to the cell inner membrane. Heme chaperone required for the biogenesis of c-type cytochromes. Transiently binds heme delivered by CcmC and transfers the heme to apo-cytochromes in a process facilitated by CcmF and CcmH. In Histophilus somni (strain 2336) (Haemophilus somnus), this protein is Cytochrome c-type biogenesis protein CcmE.